A 252-amino-acid chain; its full sequence is Cell division protein ZapD (252 aa).

The protein belongs to the ZapD family. As to quaternary structure, interacts with FtsZ.

Its subcellular location is the cytoplasm. Cell division factor that enhances FtsZ-ring assembly. Directly interacts with FtsZ and promotes bundling of FtsZ protofilaments, with a reduction in FtsZ GTPase activity. The sequence is that of Cell division protein ZapD from Dechloromonas aromatica (strain RCB).